Reading from the N-terminus, the 177-residue chain is MSEFVTVARPYAKAAFDFAVEHQSVERWQDMLAFAAEVTKNEQMAELLSGALAPETLAESFIAVCGEQLDENGQNLIRVMAENNRLNALPDVLEQFIHLRAASESTSEVEVTSATALSEEQLAKISAAMEKRLSRKVKLNCKIDKSVMAGVIIRAGDMVIDGSVRGRLERLADVLQS.

Belongs to the ATPase delta chain family. F-type ATPases have 2 components, F(1) - the catalytic core - and F(0) - the membrane proton channel. F(1) has five subunits: alpha(3), beta(3), gamma(1), delta(1), epsilon(1). F(0) has three main subunits: a(1), b(2) and c(10-14). The alpha and beta chains form an alternating ring which encloses part of the gamma chain. F(1) is attached to F(0) by a central stalk formed by the gamma and epsilon chains, while a peripheral stalk is formed by the delta and b chains.

The protein localises to the cell inner membrane. Functionally, f(1)F(0) ATP synthase produces ATP from ADP in the presence of a proton or sodium gradient. F-type ATPases consist of two structural domains, F(1) containing the extramembraneous catalytic core and F(0) containing the membrane proton channel, linked together by a central stalk and a peripheral stalk. During catalysis, ATP synthesis in the catalytic domain of F(1) is coupled via a rotary mechanism of the central stalk subunits to proton translocation. This protein is part of the stalk that links CF(0) to CF(1). It either transmits conformational changes from CF(0) to CF(1) or is implicated in proton conduction. The protein is ATP synthase subunit delta of Citrobacter koseri (strain ATCC BAA-895 / CDC 4225-83 / SGSC4696).